The chain runs to 485 residues: Metalloprotease AprA (485 aa).

H187 is a Zn(2+) binding site. The active site involves E188. Zn(2+) is bound by residues H191 and H197. Ca(2+)-binding residues include R268, G270, T272, D300, G302, G303, D305, T342, E344, G349, G351, D353, N358, L360, N362, G366, G367, A368, G369, D371, G375, G376, G377, G378, D380, G384, G385, T386, G387, D389, D398, D405, D415, D461, T463, N465, S467, and D469. Hemolysin-type calcium-binding repeat units follow at residues F347 to L364, K365 to L382, and W383 to A395.

Belongs to the peptidase M10B family. Requires Ca(2+) as cofactor. The cofactor is Zn(2+).

The protein resides in the secreted. Secreted protease which is important for P.entomophila to counteract the local immune response of Drosophila. Can degrade antimicrobial peptides (AMPs), e.g. Diptericin and Cecropin A. Thus, protects P.entomophila from the Drosophila antimicrobial peptides produced by the gut innate immune response, and promotes bacterial persistence in the Drosophila gut and killing of the host. Is responsible for maturation of pro-Monalysin to the active toxin Monalysin, by cleaving its N-terminus. The sequence is that of Metalloprotease AprA from Pseudomonas entomophila (strain L48).